A 564-amino-acid chain; its full sequence is Potassium-transporting ATPase potassium-binding subunit (564 aa).

Helical transmembrane passes span 4-24 (YDYL…PWLG), 67-87 (TLAL…VLLL), 135-155 (IGLT…LVAL), 179-199 (LYGL…QGVP), 258-278 (FEVA…GHYV), 286-306 (AIIA…LWSE), 382-402 (AGLY…GLMI), 420-440 (LLVA…AIAA), 487-507 (VMIG…VLAL), and 534-554 (LLLL…LALG).

Belongs to the KdpA family. The system is composed of three essential subunits: KdpA, KdpB and KdpC.

It localises to the cell inner membrane. Part of the high-affinity ATP-driven potassium transport (or Kdp) system, which catalyzes the hydrolysis of ATP coupled with the electrogenic transport of potassium into the cytoplasm. This subunit binds the periplasmic potassium ions and delivers the ions to the membrane domain of KdpB through an intramembrane tunnel. The polypeptide is Potassium-transporting ATPase potassium-binding subunit (Pseudomonas entomophila (strain L48)).